Consider the following 489-residue polypeptide: Ribulose bisphosphate carboxylase large chain (489 aa).

Asparagine 128 and threonine 178 together coordinate substrate. Residue lysine 180 is the Proton acceptor of the active site. Lysine 182 lines the substrate pocket. Residues lysine 206, aspartate 208, and glutamate 209 each contribute to the Mg(2+) site. Position 206 is an N6-carboxylysine (lysine 206). The active-site Proton acceptor is histidine 298. Arginine 299, histidine 331, and serine 383 together coordinate substrate.

It belongs to the RuBisCO large chain family. Type I subfamily. Heterohexadecamer of 8 large chains and 8 small chains. Mg(2+) is required as a cofactor.

It catalyses the reaction 2 (2R)-3-phosphoglycerate + 2 H(+) = D-ribulose 1,5-bisphosphate + CO2 + H2O. The catalysed reaction is D-ribulose 1,5-bisphosphate + O2 = 2-phosphoglycolate + (2R)-3-phosphoglycerate + 2 H(+). Functionally, ruBisCO catalyzes two reactions: the carboxylation of D-ribulose 1,5-bisphosphate, the primary event in carbon dioxide fixation, as well as the oxidative fragmentation of the pentose substrate. Both reactions occur simultaneously and in competition at the same active site. This Nitrosospira multiformis (strain ATCC 25196 / NCIMB 11849 / C 71) protein is Ribulose bisphosphate carboxylase large chain.